Consider the following 391-residue polypeptide: Pyoverdine export membrane fusion protein PvdR (391 aa).

The first 24 residues, 1 to 24 (MRRTRSTRRALLVAVCLSPLIALA), serve as a signal peptide directing secretion. Residues 108 to 180 (IEMLKAQLAE…QASLRSDEAE (73 aa)) are a coiled coil. A disordered region spans residues 263–289 (LPVPPKPLDQSNQGGGSPTSGSGGQSG). Positions 275–289 (QGGGSPTSGSGGQSG) are enriched in gly residues.

It belongs to the membrane fusion protein (MFP) (TC 8.A.1) family. In terms of assembly, part of the tripartite efflux system PvdRT-OpmQ, which is composed of an inner membrane component with both ATPase and permease domains, PvdT, a periplasmic membrane fusion protein, PvdR, and an outer membrane component, OpmQ.

The protein resides in the periplasm. Part of the tripartite efflux system PvdRT-OpmQ required for the secretion into the extracellular milieu of the siderophore pyoverdine (PVD), which is involved in iron acquisition. This subunit is an adapter protein that stimulates the ATPase activity of PvdT and connects the inner and outer membrane components. The system is responsible for export of newly synthesized PVD after the final steps of biosynthesis have taken place in the periplasm. It is also responsible for recycling of PVD after internalization of ferri-PVD into the periplasm by the outer-membrane receptor FpvA and release of iron from PVD, thus making PVD available for new cycles of iron uptake. In addition, can expel unwanted metals complexed with PVD from the periplasm into the extracellular medium. Does not contribute to resistance to antibiotics belonging to the classes of tetracyclines, aminoglycosides, beta-lactams and macrolides, and chloramphenicol. The polypeptide is Pyoverdine export membrane fusion protein PvdR (Pseudomonas aeruginosa (strain ATCC 15692 / DSM 22644 / CIP 104116 / JCM 14847 / LMG 12228 / 1C / PRS 101 / PAO1)).